We begin with the raw amino-acid sequence, 1256 residues long: Muramidase-released protein (1256 aa).

The N-terminal stretch at 1-47 (MRRSNKKSFDWYGTKQQFSIRKYHFGAASVLLGVSLVLGAGAQVVKA) is a signal peptide. Small repeat units lie at residues 663 to 681 (KTTG…VYEK) and 839 to 861 (KTDG…VYQK). 3 disordered regions span residues 873–949 (PETD…VDTP), 967–994 (GNPI…KTVT), and 1028–1049 (KEPV…TDNK). The stretch at 953-1006 (VPVKKVVTNHVDEEGNPIAPQEEGTKPNKSIPGYEFTGKTVTDEDGNTTHIYKK) is one Large repeat. Positions 1033–1045 (DTPTSPEGTPYDT) are enriched in polar residues. A Small repeat occupies 1064–1084 (RVDGTENGKVVEGETVVTYVY). 2 Large repeats span residues 1089 to 1142 (TPAK…IYKK) and 1143 to 1195 (TPAK…IYRK). The segment at 1102–1137 (EGNPVAPQEEGTKPNKSIPGYEFTGKTVTDEDGNTT) is disordered. The interval 1196–1229 (LSNKPTTPEKETPAKPQAGKTASGKAQLPNTGEA) is disordered. The short motif at 1223 to 1227 (LPNTG) is the LPXTG sorting signal element. Pentaglycyl murein peptidoglycan amidated threonine is present on threonine 1226. The propeptide at 1227 to 1256 (GEASSVAGALGTAMLVATLAFARKRRRNED) is removed by sortase.

The protein localises to the secreted. It localises to the cell wall. In Streptococcus suis, this protein is Muramidase-released protein (mrp).